Here is a 303-residue protein sequence, read N- to C-terminus: Ribosomal large subunit pseudouridine synthase C (303 aa).

Residues 11-87 (FRLDKYLKRL…AEIKLAKKIL (77 aa)) form the S4 RNA-binding domain. Residue Asp-140 is part of the active site.

This sequence belongs to the pseudouridine synthase RluA family.

It catalyses the reaction uridine(955/2504/2580) in 23S rRNA = pseudouridine(955/2504/2580) in 23S rRNA. In terms of biological role, responsible for synthesis of pseudouridine from uracil at positions 955, 2504 and 2580 in 23S ribosomal RNA. This is Ribosomal large subunit pseudouridine synthase C (rluC) from Rickettsia prowazekii (strain Madrid E).